The following is a 1008-amino-acid chain: Pre-mRNA-splicing factor SNU114 (1008 aa).

Ser-85 is modified (phosphoserine). The residue at position 88 (Thr-88) is a Phosphothreonine. In terms of domain architecture, tr-type G spans 131 to 338 (ERIINVGVIG…SYYYAHSIPS (208 aa)). The tract at residues 140 to 147 (GPLHSGKT) is G1. A GTP-binding site is contributed by 140-147 (GPLHSGKT). Residues 188–192 (GLSIK) form a G2 region. The segment at 214–217 (DAPG) is G3. GTP contacts are provided by residues 214-218 (DAPGH) and 268-271 (NKLD). The G4 stretch occupies residues 268–271 (NKLD). A G5 region spans residues 315–317 (STK). The interval 504–536 (TSQSESRQKRQLHDISKTETSNEDEDEDDETPS) is disordered. Basic and acidic residues predominate over residues 509–520 (SRQKRQLHDISK). Positions 524 to 536 (SNEDEDEDDETPS) are enriched in acidic residues.

The protein belongs to the TRAFAC class translation factor GTPase superfamily. Classic translation factor GTPase family. EF-G/EF-2 subfamily. Belongs to the CWC complex (or CEF1-associated complex), a spliceosome sub-complex reminiscent of a late-stage spliceosome composed of the U2, U5 and U6 snRNAs and at least BUD13, BUD31, BRR2, CDC40, CEF1, CLF1, CUS1, CWC2, CWC15, CWC21, CWC22, CWC23, CWC24, CWC25, CWC27, ECM2, HSH155, IST3, ISY1, LEA1, MSL1, NTC20, PRP8, PRP9, PRP11, PRP19, PRP21, PRP22, PRP45, PRP46, SLU7, SMB1, SMD1, SMD2, SMD3, SMX2, SMX3, SNT309, SNU114, SPP2, SYF1, SYF2, RSE1 and YJU2. Component of the U4/U6-U5 tri-snRNP complex composed of the U4, U6 and U5 snRNAs and at least PRP3, PRP4, PRP6, PRP8, PRP18, PRP31, PRP38, SNU13, SNU23, SNU66, SNU114, SPP381, SMB1, SMD1, SMD2, SMD3, SMX2, SMX3, LSM2, LSM3, LSM4, LSM5, LSM6, LSM7, LSM8, BRR2 and DIB1. Interacts (via C-terminus) with CWC21. Interacts (via N-terminus) with PRP8 (via SCwid domain).

The protein localises to the nucleus. Component of the U5 snRNP complex required for pre-mRNA splicing. Binds GTP. The polypeptide is Pre-mRNA-splicing factor SNU114 (SNU114) (Saccharomyces cerevisiae (strain ATCC 204508 / S288c) (Baker's yeast)).